Consider the following 3326-residue polypeptide: Deoxyribonuclease CdiA (3326 aa).

The segment at 36-342 (TADGVLTSGG…ARGALTLTGS (307 aa)) is two-partner system transport domain (TPS). An FHA-1 region spans residues 343-1396 (YAGAGSLYSD…ITVRTGTLTN (1054 aa)). Residues 1397–1765 (QREGLVVTES…QQLGSPSLTD (369 aa)) form a receptor binding domain (RBD) region. Residues 1766–1951 (YPLPTSQSGL…LAQADKTNLQ (186 aa)) form a YP domain region. The tract at residues 1959–2097 (SVSLSAGGDI…AGGPLQLAAG (139 aa)) is periplasmic FHA-1 repeat (pFR). The FHA-2 stretch occupies residues 2125-2660 (QGLVQSTVAS…SNRYDSKQTS (536 aa)). The VENN CT cleavage motif motif lies at 3060-3063 (VENN). The CT domain stretch occupies residues 3060–3326 (VENNSLGDIA…DRNRQIGVIK (267 aa)).

It in the N-terminal section; belongs to the CdiA toxin family. The C-terminal (CT) domain interacts with cognate CdiI but not non-cognate CdiI from E.coli strain 536 / UPEC.

It localises to the target cell. The protein localises to the target cell cytoplasm. Functionally, toxic component of a toxin-immunity protein module, which functions as a cellular contact-dependent growth inhibition (CDI) system. CDI modules allow bacteria to communicate with and inhibit the growth of closely related neighboring bacteria in a contact-dependent fashion. CDI is neutralized by its cognate immunity protein CdiI, but not by non-cognate CdiI from other bacteria. The C-terminal domain (CT) has strong DNase activity; this activity is inhibited by cognate CdiI. The CdiA protein is thought to be exported from the cell through the central lumen of CdiB, the other half of its two-partner system (TPS). The TPS domain probably remains associated with CdiB while the FHA-1 domain forms an extended filament with the receptor-binding domain (RBD) at its extremity; in the secretion arrested state the C-terminus of the RBD and YP domains form a hairpin-like structure as the FHA-2, PT and CT domains are periplasmic. The YP domain is probably responsible for this arrest at the point where it re-enters the host cell periplasm. Upon binding to a target cell outer membrane receptor a signal is transmitted to activate secretion. The filament elongates slightly, the rest of CdiA is secreted and the FHA-2 domain becomes stably associated with the target cell's outer membrane where it facilitates entry of the toxic CT domain into the target cell periplasm. From there the toxic CT domain is cleaved and gains access to the target cell cytoplasm via an inner membrane protein. This Dickeya dadantii (strain 3937) (Erwinia chrysanthemi (strain 3937)) protein is Deoxyribonuclease CdiA.